A 117-amino-acid chain; its full sequence is Large ribosomal subunit protein uL18 (117 aa).

The protein belongs to the universal ribosomal protein uL18 family. In terms of assembly, part of the 50S ribosomal subunit; part of the 5S rRNA/L5/L18/L25 subcomplex. Contacts the 5S and 23S rRNAs.

This is one of the proteins that bind and probably mediate the attachment of the 5S RNA into the large ribosomal subunit, where it forms part of the central protuberance. This is Large ribosomal subunit protein uL18 from Polynucleobacter necessarius subsp. necessarius (strain STIR1).